The primary structure comprises 196 residues: ATP-dependent Clp protease proteolytic subunit (196 aa).

Catalysis depends on serine 101, which acts as the Nucleophile. The active site involves histidine 126.

This sequence belongs to the peptidase S14 family. Component of the chloroplastic Clp protease core complex.

The protein localises to the plastid. It localises to the chloroplast stroma. The enzyme catalyses Hydrolysis of proteins to small peptides in the presence of ATP and magnesium. alpha-casein is the usual test substrate. In the absence of ATP, only oligopeptides shorter than five residues are hydrolyzed (such as succinyl-Leu-Tyr-|-NHMec, and Leu-Tyr-Leu-|-Tyr-Trp, in which cleavage of the -Tyr-|-Leu- and -Tyr-|-Trp bonds also occurs).. Functionally, cleaves peptides in various proteins in a process that requires ATP hydrolysis. Has a chymotrypsin-like activity. Plays a major role in the degradation of misfolded proteins. The chain is ATP-dependent Clp protease proteolytic subunit from Helianthus annuus (Common sunflower).